Here is a 61-residue protein sequence, read N- to C-terminus: Metallothionein-2E (61 aa).

Methionine 1 is subject to N-acetylmethionine. The interval 1–29 (MDPNCSCATRDSCACASSCKCKECKCTSC) is beta. Residues cysteine 5, cysteine 7, cysteine 13, cysteine 15, cysteine 19, cysteine 21, cysteine 24, cysteine 26, cysteine 29, cysteine 33, cysteine 34, cysteine 36, cysteine 37, cysteine 41, cysteine 44, cysteine 48, cysteine 50, cysteine 57, cysteine 59, and cysteine 60 each contribute to the a divalent metal cation site. An alpha region spans residues 30-61 (KKSCCSCCPAGCTKCAQGCICKGALDKCSCCA).

This sequence belongs to the metallothionein superfamily. Type 1 family. As to quaternary structure, monomer.

In terms of biological role, metallothioneins have a high content of cysteine residues that bind various heavy metals; these proteins are transcriptionally regulated by both heavy metals and glucocorticoids. In Oryctolagus cuniculus (Rabbit), this protein is Metallothionein-2E.